The following is an 81-amino-acid chain: Large ribosomal subunit protein bL27 (81 aa).

Positions 1 to 11 (MATSKSGGSSK) are enriched in polar residues. Positions 1 to 26 (MATSKSGGSSKNGRDSISKRLGVKRS) are disordered.

The protein belongs to the bacterial ribosomal protein bL27 family.

This is Large ribosomal subunit protein bL27 from Borrelia turicatae (strain 91E135).